The primary structure comprises 135 residues: Methylglyoxal synthase (135 aa).

One can recognise an MGS-like domain in the interval 1-135; the sequence is MQKTLALVAH…GLYERAVPEF (135 aa). Residues His10, Lys14, 36-39, and 56-57 each bind substrate; these read TGTT and SG. The Proton donor/acceptor role is filled by Asp62. Position 89 (His89) interacts with substrate.

Belongs to the methylglyoxal synthase family.

It catalyses the reaction dihydroxyacetone phosphate = methylglyoxal + phosphate. Functionally, catalyzes the formation of methylglyoxal from dihydroxyacetone phosphate. The polypeptide is Methylglyoxal synthase (Pseudoalteromonas atlantica (strain T6c / ATCC BAA-1087)).